A 250-amino-acid chain; its full sequence is GTP cyclohydrolase 1 (250 aa).

Composition is skewed to basic and acidic residues over residues 1–14 (MEKG…EKPR) and 35–44 (PAEKPPRPEA). Residues 1–64 (MEKGPVRAPA…GERPRSEEDN (64 aa)) form a disordered region. Phosphoserine is present on residues Ser-60 and Ser-81. Zn(2+) contacts are provided by Cys-141, His-144, and Cys-212.

The protein belongs to the GTP cyclohydrolase I family. Toroid-shaped homodecamer, composed of a dimer of pentamers. The inactive isoforms also form decamers and may possibly be incorporated into GCH1 heterodecamers, decreasing enzyme stability and activity. Interacts with AHSA1 and GCHFR/GFRP. Phosphorylated by casein kinase II at Ser-81 in HAECs during oscillatory shear stress; phosphorylation at Ser-81 results in increased enzyme activity. In epidermis, expressed predominantly in basal undifferentiated keratinocytes and in some but not all melanocytes (at protein level).

It is found in the cytoplasm. Its subcellular location is the nucleus. The catalysed reaction is GTP + H2O = 7,8-dihydroneopterin 3'-triphosphate + formate + H(+). It participates in cofactor biosynthesis; 7,8-dihydroneopterin triphosphate biosynthesis; 7,8-dihydroneopterin triphosphate from GTP: step 1/1. Its activity is regulated as follows. GTP shows a positive allosteric effect, and tetrahydrobiopterin inhibits the enzyme activity. Zinc is required for catalytic activity. Inhibited by Mg(2+). Functionally, positively regulates nitric oxide synthesis in umbilical vein endothelial cells (HUVECs). May be involved in dopamine synthesis. May modify pain sensitivity and persistence. Isoform GCH-1 is the functional enzyme, the potential function of the enzymatically inactive isoforms remains unknown. The chain is GTP cyclohydrolase 1 (GCH1) from Homo sapiens (Human).